The chain runs to 485 residues: N-succinylglutamate 5-semialdehyde dehydrogenase (485 aa).

220-225 (GSANTG) is an NAD(+) binding site. Active-site residues include E243 and C278.

This sequence belongs to the aldehyde dehydrogenase family. AstD subfamily.

It catalyses the reaction N-succinyl-L-glutamate 5-semialdehyde + NAD(+) + H2O = N-succinyl-L-glutamate + NADH + 2 H(+). It functions in the pathway amino-acid degradation; L-arginine degradation via AST pathway; L-glutamate and succinate from L-arginine: step 4/5. In terms of biological role, catalyzes the NAD-dependent reduction of succinylglutamate semialdehyde into succinylglutamate. This Vibrio vulnificus (strain YJ016) protein is N-succinylglutamate 5-semialdehyde dehydrogenase.